The chain runs to 832 residues: Protein P (832 aa).

The tract at residues 1 to 177 (MPLSYQHFRR…FCGSPYSWEQ (177 aa)) is terminal protein domain (TP). Residues 178–335 (ELQHGAESFH…YCLSHIVNLL (158 aa)) form a spacer region. A disordered region spans residues 241–263 (RRPFGVEPSGSGHTTNLASKSAS). A compositionally biased stretch (polar residues) spans 251–263 (SGHTTNLASKSAS). Residues 336-679 (EDWGPCAEHG…YLNLYPVARQ (344 aa)) form a polymerase/reverse transcriptase domain (RT) region. Residues 346 to 589 (EHHIRIPRTP…YSLHFMGYVI (244 aa)) form the Reverse transcriptase domain. Asp418, Asp540, and Asp541 together coordinate Mg(2+).

The protein belongs to the hepadnaviridae P protein family.

The catalysed reaction is DNA(n) + a 2'-deoxyribonucleoside 5'-triphosphate = DNA(n+1) + diphosphate. The enzyme catalyses Endonucleolytic cleavage to 5'-phosphomonoester.. Activated by host HSP70 and HSP40 in vitro to be able to bind the epsilon loop of the pgRNA. Because deletion of the RNase H region renders the protein partly chaperone-independent, the chaperones may be needed indirectly to relieve occlusion of the RNA-binding site by this domain. Inhibited by several reverse-transcriptase inhibitors: Lamivudine, Adefovir and Entecavir. Functionally, multifunctional enzyme that converts the viral RNA genome into dsDNA in viral cytoplasmic capsids. This enzyme displays a DNA polymerase activity that can copy either DNA or RNA templates, and a ribonuclease H (RNase H) activity that cleaves the RNA strand of RNA-DNA heteroduplexes in a partially processive 3'- to 5'-endonucleasic mode. Neo-synthesized pregenomic RNA (pgRNA) are encapsidated together with the P protein, and reverse-transcribed inside the nucleocapsid. Initiation of reverse-transcription occurs first by binding the epsilon loop on the pgRNA genome, and is initiated by protein priming, thereby the 5'-end of (-)DNA is covalently linked to P protein. Partial (+)DNA is synthesized from the (-)DNA template and generates the relaxed circular DNA (RC-DNA) genome. After budding and infection, the RC-DNA migrates in the nucleus, and is converted into a plasmid-like covalently closed circular DNA (cccDNA). The activity of P protein does not seem to be necessary for cccDNA generation, and is presumably released from (+)DNA by host nuclear DNA repair machinery. This Homo sapiens (Human) protein is Protein P.